A 466-amino-acid polypeptide reads, in one-letter code: Vacuolar-processing enzyme delta-isozyme (466 aa).

A signal peptide spans 1–24 (MSSPLGHFQILVFLHALLIFSAES). Residue N137 is glycosylated (N-linked (GlcNAc...) asparagine). H164 is a catalytic residue. Residue C206 is the Nucleophile of the active site. C239 and C253 are oxidised to a cystine. A glycan (N-linked (GlcNAc...) asparagine) is linked at N322. Cystine bridges form between C417–C447 and C429–C464.

This sequence belongs to the peptidase C13 family. In terms of processing, auto-catalytic activation. As to expression, seed specific. Restricted to developing seeds at 7 days after anthesis, and, at lower levels, detected in flowers. Detected in siliques, specifically in seed coats (at protein level).

It localises to the secreted. The protein localises to the extracellular space. The protein resides in the cell wall. It is found in the vacuole. The enzyme catalyses Hydrolysis of proteins and small molecule substrates at -Asn-|-Xaa- bonds.. Its activity is regulated as follows. Strongly inhibited by biotin-YVAD-fmk (a caspase-1 inhibitor) and by Ac-DEVD-fmk. Asparagine-specific endopeptidase that may be involved in processing of proteins targeted to vacuoles. Probably involved in post-translational proteolysis of seed storage proteins in the protein storage vacuole of developing seeds. Exhibits a caspase-1-like activity in extracellular granules. At the early stage of seed development, required for the formation of the seed coat, by regulating cell death of specific cell layers in inner integument. In Arabidopsis thaliana (Mouse-ear cress), this protein is Vacuolar-processing enzyme delta-isozyme.